Here is a 279-residue protein sequence, read N- to C-terminus: Shikimate dehydrogenase (NADP(+)) (279 aa).

Shikimate is bound by residues 16–18 and Thr63; that span reads SRS. Residue Lys67 is the Proton acceptor of the active site. Residues Asn88 and Asp103 each contribute to the shikimate site. NADP(+) is bound by residues 128 to 132 and Met219; that span reads GAGGA. Tyr221 is a binding site for shikimate. An NADP(+)-binding site is contributed by Gly243.

This sequence belongs to the shikimate dehydrogenase family. In terms of assembly, homodimer.

The enzyme catalyses shikimate + NADP(+) = 3-dehydroshikimate + NADPH + H(+). Its pathway is metabolic intermediate biosynthesis; chorismate biosynthesis; chorismate from D-erythrose 4-phosphate and phosphoenolpyruvate: step 4/7. Functionally, involved in the biosynthesis of the chorismate, which leads to the biosynthesis of aromatic amino acids. Catalyzes the reversible NADPH linked reduction of 3-dehydroshikimate (DHSA) to yield shikimate (SA). This chain is Shikimate dehydrogenase (NADP(+)), found in Aromatoleum aromaticum (strain DSM 19018 / LMG 30748 / EbN1) (Azoarcus sp. (strain EbN1)).